A 1332-amino-acid chain; its full sequence is Aldehyde oxidase 1 (1332 aa).

The 2Fe-2S ferredoxin-type domain occupies 4 to 91 (STLYFYVNGR…GAAVTTVEGV (88 aa)). [2Fe-2S] cluster contacts are provided by C43, C48, C51, and C73. Q112 serves as a coordination point for Mo-molybdopterin. The [2Fe-2S] cluster site is built by C113, C116, C148, and C150. C150 contacts Mo-molybdopterin. The FAD-binding PCMH-type domain occupies 234–419 (FTGDRVTWIS…LSVTIPYSRK (186 aa)). Residues 262–269 (VVMGNTSV), A343, S352, H356, D365, and L409 each bind FAD. Residues 800–801 (AF), M1041, 1082–1085 (GSVV), Q1197, and L1262 each bind Mo-molybdopterin. The Proton acceptor; for azaheterocycle hydroxylase activity role is filled by E1264.

Belongs to the xanthine dehydrogenase family. Homodimer. It depends on [2Fe-2S] cluster as a cofactor. Requires FAD as cofactor. Mo-molybdopterin serves as cofactor. In terms of tissue distribution, expressed in liver.

It is found in the cytoplasm. The enzyme catalyses an aldehyde + O2 + H2O = a carboxylate + H2O2 + H(+). The catalysed reaction is retinal + O2 + H2O = retinoate + H2O2 + H(+). With respect to regulation, inhibited by menadione and isovanillin. Not inhibited by allopurinol, a xanthine dehydrogenase potent inhibitor. Oxidase with broad substrate specificity, oxidizing aromatic azaheterocycles, such as N1-methylnicotinamide, N-methylphthalazinium and phthalazine, as well as aldehydes, such as benzaldehyde, retinal, pyridoxal, and vanillin. Plays a key role in the metabolism of xenobiotics and drugs containing aromatic azaheterocyclic substituents. Participates in the bioactivation of prodrugs such as famciclovir, catalyzing the oxidation step from 6-deoxypenciclovir to penciclovir, which is a potent antiviral agent. Is probably involved in the regulation of reactive oxygen species homeostasis. May be a prominent source of superoxide generation via the one-electron reduction of molecular oxygen. May also catalyze nitric oxide (NO) production via the reduction of nitrite to NO with NADH or aldehyde as electron donor. May play a role in adipogenesis. The protein is Aldehyde oxidase 1 of Cavia porcellus (Guinea pig).